The primary structure comprises 261 residues: MSDTEEQEYEEEQAEDEEAVEEEAPEEPEPVAEREEERPKPSRPVVPPLIPPKIPEGERVDFDDIHRKRMEKDLLELQTLIDVHFEQRKKEEEELIALKDRIERRRAERAEQQRFRTEKERERQAKLAEEKMRKEEEEAKKRAEDDAKKKKVLSNMGAHFGGYLVKAEQKRGKRQTGREMKLRILSERKKPLNIDYMGEDQLREKAQELSEWIHQLESEKFDLMEKLKQQKYEINVLYNRISHAQKFRKGAGKGRVGGRWK.

Over residues 1–30 the composition is skewed to acidic residues; that stretch reads MSDTEEQEYEEEQAEDEEAVEEEAPEEPEP. Disordered stretches follow at residues 1–61 and 108–152; these read MSDT…ERVD and ERAE…KKKV. Position 2 is a phosphoserine; by CK2 (serine 2). Residues 31 to 40 are compositionally biased toward basic and acidic residues; sequence VAEREEERPK. Residues 42 to 54 are compositionally biased toward pro residues; that stretch reads SRPVVPPLIPPKI. Residues 108-148 are compositionally biased toward basic and acidic residues; sequence ERAEQQRFRTEKERERQAKLAEEKMRKEEEEAKKRAEDDAK.

This sequence belongs to the troponin T family. Interacts with TPM3. In terms of tissue distribution, expressed in soleus muscle. Isoform 4 is predominantly expressed in fast muscles.

In terms of biological role, troponin T is the tropomyosin-binding subunit of troponin, the thin filament regulatory complex which confers calcium-sensitivity to striated muscle actomyosin ATPase activity. In Rattus norvegicus (Rat), this protein is Troponin T, slow skeletal muscle (Tnnt1).